Reading from the N-terminus, the 159-residue chain is Phosphopantetheine adenylyltransferase (159 aa).

Thr10 serves as a coordination point for substrate. Residues 10–11 (TF) and His18 contribute to the ATP site. 3 residues coordinate substrate: Lys42, Leu73, and Arg87. ATP contacts are provided by residues 88 to 90 (GLR), Glu98, and 123 to 129 (YSYVSGT).

The protein belongs to the bacterial CoaD family. As to quaternary structure, homohexamer. The cofactor is Mg(2+).

Its subcellular location is the cytoplasm. It catalyses the reaction (R)-4'-phosphopantetheine + ATP + H(+) = 3'-dephospho-CoA + diphosphate. It participates in cofactor biosynthesis; coenzyme A biosynthesis; CoA from (R)-pantothenate: step 4/5. Functionally, reversibly transfers an adenylyl group from ATP to 4'-phosphopantetheine, yielding dephospho-CoA (dPCoA) and pyrophosphate. The chain is Phosphopantetheine adenylyltransferase from Coxiella burnetii (strain CbuK_Q154) (Coxiella burnetii (strain Q154)).